Reading from the N-terminus, the 839-residue chain is Autophagy-related protein 9A (839 aa).

The tract at residues 1-20 (MAQFDTEYQRLEASYSDSPP) is disordered. Ala2 bears the N-acetylalanine mark. At 2-61 (AQFDTEYQRLEASYSDSPPGEEDLLVHVAEGSKSPWHHIENLDLFFSRVYNLHQKNGFTC) the chain is on the cytoplasmic side. Positions 8–11 (YQRL) match the Tyrosine-based sorting signal motif. Ser14, Ser16, and Ser18 each carry phosphoserine. The helical transmembrane segment at 62–84 (MLIGEIFELMQFLFVVAFTTFLV) threads the bilayer. The Lumenal segment spans residues 85–128 (SCVDYDILFANKMVNHSLHPTEPVKVTLPDAFLPAQVCSARIQE). Asn99 is a glycosylation site (N-linked (GlcNAc...) asparagine). The chain crosses the membrane as a helical span at residues 129-154 (NGSLITILVIAGVFWIHRLIKFIYNI). The Cytoplasmic portion of the chain corresponds to 155–290 (CCYWEIHSFY…ELAQRLSNRI (136 aa)). An intramembrane segment occupies 291–301 (LWIGIANFLLC). Topologically, residues 302 to 319 (PLILIWQILYAFFSYAEV) are cytoplasmic. The stretch at 320-328 (LKREPGALG) is an intramembrane region. Residues 329 to 371 (ARCWSLYGRCYLRHFNELEHELQSRLNRGYKPASKYMNCFLSP) lie on the Cytoplasmic side of the membrane. The helical transmembrane segment at 372–397 (LLTLLAKNGAFFAGSILAVLIALTIY) threads the bilayer. Residues 398–406 (DEDVLAVEH) are Lumenal-facing. A helical membrane pass occupies residues 407-424 (VLTTVTLLGVTVTVCRSF). Residues 425–470 (IPDQHMVFCPEQLLRVILAHIHYMPDHWQGNAHRSQTRDEFAQLFQ) are Cytoplasmic-facing. The stretch at 471–480 (YKAVFILEEL) is an intramembrane region. Residues 481 to 483 (LSP) lie on the Cytoplasmic side of the membrane. An intramembrane segment occupies 484–492 (IVTPLILIF). Over 493–839 (CLRPRALEII…DELPPQVHKV (347 aa)) the chain is Cytoplasmic. Residues Ser656, Ser735, Ser738, Ser741, and Ser828 each carry the phosphoserine modification. Disordered stretches follow at residues 656–686 (SPLQ…SSGS) and 719–839 (QQAQ…VHKV). The segment covering 724–736 (EPERHLWHRRESD) has biased composition (basic and acidic residues). Composition is skewed to acidic residues over residues 737–747 (ESGESAPDEGG) and 823–832 (VPEEGSEDEL).

It belongs to the ATG9 family. In terms of assembly, homotrimer; forms a homotrimer with a central pore that forms a path between the two membrane leaflets. Interacts (via cytoplasmic its C-terminus) with ATG2A. Interacts with SUPT20H. Interacts (via the tyrosine-based sorting signal motif) with AP4M1; promoting association with the AP-4 complex. Interacts with ARFIP1 and ARFIP2. Interacts with PI4K2A and PI4KB. Interacts with ATG4A; the interaction is direct and promotes ATG9A trafficking. Post-translationally, ufmylated in a DDRGK1 dependent manner.

It is found in the preautophagosomal structure membrane. The protein resides in the cytoplasmic vesicle. The protein localises to the autophagosome membrane. It localises to the golgi apparatus. Its subcellular location is the trans-Golgi network membrane. It is found in the late endosome membrane. The protein resides in the recycling endosome membrane. The protein localises to the endoplasmic reticulum membrane. It localises to the mitochondrion membrane. The enzyme catalyses a 1,2-diacyl-sn-glycero-3-phosphocholine(in) = a 1,2-diacyl-sn-glycero-3-phosphocholine(out). It carries out the reaction a 1,2-diacyl-sn-glycero-3-phospho-L-serine(in) = a 1,2-diacyl-sn-glycero-3-phospho-L-serine(out). The catalysed reaction is a 1,2-diacyl-sn-glycero-3-phosphoethanolamine(in) = a 1,2-diacyl-sn-glycero-3-phosphoethanolamine(out). Phospholipid scramblase involved in autophagy by mediating autophagosomal membrane expansion. Cycles between the preautophagosomal structure/phagophore assembly site (PAS) and the cytoplasmic vesicle pool and supplies membrane for the growing autophagosome. Lipid scramblase activity plays a key role in preautophagosomal structure/phagophore assembly by distributing the phospholipids that arrive through ATG2 (ATG2A or ATG2B) from the cytoplasmic to the luminal leaflet of the bilayer, thereby driving autophagosomal membrane expansion. Also required to supply phosphatidylinositol 4-phosphate to the autophagosome initiation site by recruiting the phosphatidylinositol 4-kinase beta (PI4KB) in a process dependent on ARFIP2, but not ARFIP1. In addition to autophagy, also plays a role in necrotic cell death. The chain is Autophagy-related protein 9A from Pongo abelii (Sumatran orangutan).